The sequence spans 59 residues: uncharacterized protein (59 aa).

This is an uncharacterized protein from Saccharomyces cerevisiae (strain ATCC 204508 / S288c) (Baker's yeast).